We begin with the raw amino-acid sequence, 196 residues long: DnaA initiator-associating protein DiaA (196 aa).

Residues 34–196 (LVQSLLNGNK…DSTLFPHQDE (163 aa)) form the SIS domain.

Belongs to the SIS family. DiaA subfamily. Homotetramer; dimer of dimers.

Required for the timely initiation of chromosomal replication via direct interactions with the DnaA initiator protein. The protein is DnaA initiator-associating protein DiaA of Serratia proteamaculans (strain 568).